Consider the following 308-residue polypeptide: MNHFLDIHKTDTAELRQMMDSAHAMKAARKGRPKGQLDEDQPLAGRMVALIFEKPSTRTRVSFDVGVRQMGGQTMVLSGKEMQLGHGETIADTARVLSRYVDLIMIRTFEEATLLEMAEHATVPVINGLTNRTHPCQIMADVMTYEEHRGPIAGRKVVWAGDGNNVCASFLHAAGQFGFDFTFTGPSTLDPEAEFVGYAREKGRRVSIERDPAKAVAGADLVVTDTWVSMHDPQSARERRHNQLRPYQVNETLMAQAKPDALFMHCLPAHRDDEATSAVMDGPHSVIFDEAENRLHAQKAIMRWCLGL.

Residues 56–59 (STRT), Gln-83, Arg-107, and 134–137 (HPCQ) contribute to the carbamoyl phosphate site. L-ornithine is bound by residues Asn-165, Asp-225, and 229–230 (SM). Carbamoyl phosphate-binding positions include 266 to 267 (CL) and Arg-294.

Belongs to the aspartate/ornithine carbamoyltransferase superfamily. OTCase family.

It localises to the cytoplasm. It carries out the reaction carbamoyl phosphate + L-ornithine = L-citrulline + phosphate + H(+). It participates in amino-acid biosynthesis; L-arginine biosynthesis; L-arginine from L-ornithine and carbamoyl phosphate: step 1/3. Reversibly catalyzes the transfer of the carbamoyl group from carbamoyl phosphate (CP) to the N(epsilon) atom of ornithine (ORN) to produce L-citrulline. In Cereibacter sphaeroides (strain ATCC 17023 / DSM 158 / JCM 6121 / CCUG 31486 / LMG 2827 / NBRC 12203 / NCIMB 8253 / ATH 2.4.1.) (Rhodobacter sphaeroides), this protein is Ornithine carbamoyltransferase.